A 105-amino-acid chain; its full sequence is MVNNVTDSSFKNEVLESDLPVMVDFWAEWCGPCKMLIPIIDEISKELQDKVKVLKMNIDENPKTPSEYGIRSIPTIMLFKNGEQKDTKIGLQQKNSLLDWINKSI.

In terms of domain architecture, Thioredoxin spans 1 to 105; sequence MVNNVTDSSF…SLLDWINKSI (105 aa). A disulfide bridge connects residues Cys-30 and Cys-33.

Belongs to the thioredoxin family.

Component of the thioredoxin-thioredoxin reductase system. Participates in various redox reactions through the reversible oxidation of its active center dithiol to a disulfide and catalyzes dithiol-disulfide exchange reactions. The chain is Thioredoxin (trxA) from Rickettsia prowazekii (strain Madrid E).